Consider the following 188-residue polypeptide: Ribosome-recycling factor (188 aa).

It belongs to the RRF family.

Its subcellular location is the cytoplasm. In terms of biological role, responsible for the release of ribosomes from messenger RNA at the termination of protein biosynthesis. May increase the efficiency of translation by recycling ribosomes from one round of translation to another. The sequence is that of Ribosome-recycling factor from Bradyrhizobium diazoefficiens (strain JCM 10833 / BCRC 13528 / IAM 13628 / NBRC 14792 / USDA 110).